The following is a 345-amino-acid chain: RDS/peripherin-like protein xRDS35 (345 aa).

Topologically, residues 1–24 (MVLFKAKFSFQRRVKLAQTLWLLS) are cytoplasmic. Residues 25 to 43 (WLSVLVGCLTFGMGIFLKV) traverse the membrane as a helical segment. The Lumenal segment spans residues 44-61 (QLWIHNEVMENTSAHAVP). A glycan (N-linked (GlcNAc...) asparagine) is linked at Asn-54. Residues 62 to 80 (NTVITAGLVGILLGIYAGK) form a helical membrane-spanning segment. The Cytoplasmic portion of the chain corresponds to 81 to 99 (VSQASMDVTKYQRWKSFMM). Residues 100–123 (PFFFLAILSCLVCLAALVLSVALR) traverse the membrane as a helical segment. Residues 124-264 (GTLEESLKIG…LSYYTGIMAT (141 aa)) lie on the Lumenal side of the membrane. The N-linked (GlcNAc...) asparagine glycan is linked to Asn-229. Residues 265 to 290 (NGAAVTLSFLLQASVLVSLRYLHTSM) form a helical membrane-spanning segment. Over 291 to 345 (DKISGPDDMEADTEGFILEKGVTETMNTTLEKMKGLFMSNQVETAEGGGEAAAAS) the chain is Cytoplasmic.

It belongs to the PRPH2/ROM1 family. As to quaternary structure, homodimer; disulfide-linked. As to expression, rod specific.

The protein resides in the membrane. The chain is RDS/peripherin-like protein xRDS35 (rds35) from Xenopus laevis (African clawed frog).